The following is a 419-amino-acid chain: Peptide chain release factor subunit 1 (419 aa).

This sequence belongs to the eukaryotic release factor 1 family. In terms of assembly, heterodimer of two subunits, one of which binds GTP.

The protein localises to the cytoplasm. Its function is as follows. Directs the termination of nascent peptide synthesis (translation) in response to the termination codons UAA, UAG and UGA. The protein is Peptide chain release factor subunit 1 of Methanococcus vannielii (strain ATCC 35089 / DSM 1224 / JCM 13029 / OCM 148 / SB).